The sequence spans 563 residues: Putative inactive polypeptide N-acetylgalactosaminyltransferase 12 (563 aa).

Residues 1–6 (MEVFAS) are Cytoplasmic-facing. A helical; Signal-anchor for type II membrane protein transmembrane segment spans residues 7–29 (VLNCCFKYIVLPVWIFIVLLLLH). At 30–563 (RDLSSWDGLM…SVMQSANILV (534 aa)) the chain is on the lumenal side. The N-linked (GlcNAc...) asparagine glycan is linked to asparagine 50. A disulfide bridge connects residues cysteine 97 and cysteine 334. The interval 109–225 (MKPASIIMIF…NGWLSPLLDT (117 aa)) is catalytic subdomain A. The catalytic subdomain B stretch occupies residues 280 to 342 (PYEVAAVRTS…PCSRVGHLQP (63 aa)). Residues asparagine 389 and asparagine 428 are each glycosylated (N-linked (GlcNAc...) asparagine). Residues 433–549 (ASGHVKTLEF…ANGKQRWILD (117 aa)) form the Ricin B-type lectin domain. Cysteine 446 and cysteine 461 form a disulfide bridge. 2 N-linked (GlcNAc...) asparagine glycosylation sites follow: asparagine 464 and asparagine 469. 2 cysteine pairs are disulfide-bonded: cysteine 485–cysteine 499 and cysteine 523–cysteine 537. The N-linked (GlcNAc...) asparagine glycan is linked to asparagine 552.

Belongs to the glycosyltransferase 2 family. GalNAc-T subfamily.

The protein localises to the golgi apparatus membrane. Its function is as follows. Probable inactive glycosyltransferase. In Drosophila melanogaster (Fruit fly), this protein is Putative inactive polypeptide N-acetylgalactosaminyltransferase 12 (pgant12).